The chain runs to 2113 residues: Unconventional myosin-VIIb (2113 aa).

The 696-residue stretch at 65-760 (QGVDDMIRLG…QDTVLEIRRS (696 aa)) folds into the Myosin motor domain. Residue 158 to 165 (GESGAGKT) coordinates ATP. Residues 637–659 (LDQLMRILTNCQPYFVRCIKPNE) are actin-binding. IQ domains are found at residues 745 to 765 (IFLK…ALDG), 763 to 792 (LDGA…AAVT), 786 to 815 (QRRA…GFER), 809 to 838 (ILVG…RIVQ), 832 to 861 (MRQR…AVVI), and 855 to 884 (KRRA…TGPQ). Ser904 carries the phosphoserine modification. Positions 962-1578 (EEEVDSLAEY…STQLLSLLAM (617 aa)) are mediates interaction with ANKS4B. One can recognise a MyTH4 1 domain in the interval 989-1189 (HIQKPLRYPL…PTWLELQAVK (201 aa)). An FERM 1 domain is found at 1194 to 1503 (IPIQVILATG…GGLKERSVFA (310 aa)). Thr1339 carries the post-translational modification Phosphothreonine. Phosphoserine is present on Ser1368. The mediates interaction with CDHR2, CDHR5 and USH1C stretch occupies residues 1497–2113 (KERSVFAMAL…GFRAPAPANP (617 aa)). One can recognise an SH3 domain in the interval 1498–1564 (ERSVFAMALQ…PTACLYTIPS (67 aa)). MyTH4 domains lie at 1641-1790 (YSPE…KAAE) and 1790-1896 (EQNV…LNVT). Ser1642 carries the phosphoserine modification. The 304-residue stretch at 1796-2099 (LHHEVYLPND…SYVQQLLNTV (304 aa)) folds into the FERM 2 domain.

It belongs to the TRAFAC class myosin-kinesin ATPase superfamily. Myosin family. Part of the IMAC/intermicrovillar adhesion complex/intermicrovillar tip-link complex composed of ANKS4B, MYO7B, USH1C, CDHR2 and CDHR5. Interacts with CDHR2. Interacts with CDHR5. Interacts with USH1C. Interacts with ANKS4B; requires initial interaction with USH1C. Interacts with CALML4; the interaction mediates the association of CALML4 with the IMAC/intermicrovillar adhesion complex. In terms of tissue distribution, expressed primarily in kidney and intestine. Detected in proximal tubule cells of the kidney and enterocytes of the intestine, specifically the distal tips of apical microvilli on these transporting epithelial cells (at protein level).

It is found in the cytoplasm. Its subcellular location is the cytoskeleton. The protein resides in the cell projection. It localises to the microvillus. Myosins are actin-based motor molecules with ATPase activity. Their highly divergent tails are presumed to bind to membranous compartments, which would be moved relative to actin filaments. As part of the intermicrovillar adhesion complex/IMAC plays a role in epithelial brush border differentiation, controlling microvilli organization and length. May link the complex to the actin core bundle of microvilli. The polypeptide is Unconventional myosin-VIIb (Myo7b) (Mus musculus (Mouse)).